The sequence spans 318 residues: cAMP/cGMP dual specificity phosphodiesterase MT0825 (318 aa).

Fe cation contacts are provided by Asp21, His23, and Asp63. AMP contacts are provided by residues His23, Asp63, and 97-98; that span reads NH. Mn(2+) is bound by residues Asp63, Asn97, His169, and His207. His209 is a Fe cation binding site. Residue His209 participates in AMP binding. The tract at residues 278–318 is C-terminal extension; that stretch reads PGQARRKIAESGIFIEPSRRDSLFKHPPMVLTSSAPRSPVD.

Belongs to the cyclic nucleotide phosphodiesterase class-III family. As to quaternary structure, homodimer. The cofactor is Fe(3+). Mn(2+) is required as a cofactor.

The protein resides in the cytoplasm. Its subcellular location is the cell membrane. It is found in the secreted. The protein localises to the cell wall. It localises to the cell envelope. It catalyses the reaction a nucleoside 2',3'-cyclic phosphate + H2O = a nucleoside 3'-phosphate + H(+). The catalysed reaction is 2',3'-cyclophospho-AMP + H2O = 3'-AMP + H(+). The enzyme catalyses 2',3'-cyclophospho-GMP + H2O = 3'-GMP + H(+). It carries out the reaction a nucleoside 3',5'-cyclic phosphate + H2O = a nucleoside 5'-phosphate + H(+). It catalyses the reaction 3',5'-cyclic AMP + H2O = AMP + H(+). The catalysed reaction is 3',5'-cyclic GMP + H2O = GMP + H(+). Its function is as follows. Cyclic nucleotide phosphodiesterase with a dual-specificity for the second messengers cAMP and cGMP. This chain is cAMP/cGMP dual specificity phosphodiesterase MT0825, found in Mycobacterium tuberculosis (strain CDC 1551 / Oshkosh).